We begin with the raw amino-acid sequence, 217 residues long: 3,4-dihydroxy-2-butanone 4-phosphate synthase (217 aa).

D-ribulose 5-phosphate is bound by residues 37-38 (RE), Asp-42, 150-154 (RGGHT), and Glu-174. Glu-38 is a Mg(2+) binding site. Residue His-153 coordinates Mg(2+).

The protein belongs to the DHBP synthase family. In terms of assembly, homodimer. Requires Mg(2+) as cofactor. It depends on Mn(2+) as a cofactor.

The catalysed reaction is D-ribulose 5-phosphate = (2S)-2-hydroxy-3-oxobutyl phosphate + formate + H(+). It participates in cofactor biosynthesis; riboflavin biosynthesis; 2-hydroxy-3-oxobutyl phosphate from D-ribulose 5-phosphate: step 1/1. Its function is as follows. Catalyzes the conversion of D-ribulose 5-phosphate to formate and 3,4-dihydroxy-2-butanone 4-phosphate. The chain is 3,4-dihydroxy-2-butanone 4-phosphate synthase from Klebsiella pneumoniae (strain 342).